A 330-amino-acid polypeptide reads, in one-letter code: ADP-L-glycero-D-manno-heptose-6-epimerase (330 aa).

NADP(+) is bound by residues 11–12 (FI), 32–33 (DN), lysine 39, lysine 54, 75–79 (EGACS), and asparagine 92. Tyrosine 139 serves as the catalytic Proton acceptor. Lysine 143 lines the NADP(+) pocket. Residue asparagine 168 participates in substrate binding. Residues valine 169 and lysine 177 each contribute to the NADP(+) site. Lysine 177 functions as the Proton acceptor in the catalytic mechanism. Substrate contacts are provided by residues arginine 179, histidine 186, 200–203 (FGEY), arginine 213, and tyrosine 292.

It belongs to the NAD(P)-dependent epimerase/dehydratase family. HldD subfamily. Homopentamer. Requires NADP(+) as cofactor.

The enzyme catalyses ADP-D-glycero-beta-D-manno-heptose = ADP-L-glycero-beta-D-manno-heptose. It participates in nucleotide-sugar biosynthesis; ADP-L-glycero-beta-D-manno-heptose biosynthesis; ADP-L-glycero-beta-D-manno-heptose from D-glycero-beta-D-manno-heptose 7-phosphate: step 4/4. In terms of biological role, catalyzes the interconversion between ADP-D-glycero-beta-D-manno-heptose and ADP-L-glycero-beta-D-manno-heptose via an epimerization at carbon 6 of the heptose. In Burkholderia cenocepacia (strain ATCC BAA-245 / DSM 16553 / LMG 16656 / NCTC 13227 / J2315 / CF5610) (Burkholderia cepacia (strain J2315)), this protein is ADP-L-glycero-D-manno-heptose-6-epimerase.